Here is a 217-residue protein sequence, read N- to C-terminus: Probable transaldolase (217 aa).

K83 serves as the catalytic Schiff-base intermediate with substrate.

This sequence belongs to the transaldolase family. Type 3B subfamily.

It is found in the cytoplasm. The enzyme catalyses D-sedoheptulose 7-phosphate + D-glyceraldehyde 3-phosphate = D-erythrose 4-phosphate + beta-D-fructose 6-phosphate. It participates in carbohydrate degradation; pentose phosphate pathway; D-glyceraldehyde 3-phosphate and beta-D-fructose 6-phosphate from D-ribose 5-phosphate and D-xylulose 5-phosphate (non-oxidative stage): step 2/3. In terms of biological role, transaldolase is important for the balance of metabolites in the pentose-phosphate pathway. The sequence is that of Probable transaldolase from Paracoccus denitrificans (strain Pd 1222).